Here is a 290-residue protein sequence, read N- to C-terminus: Ribonuclease HIII (290 aa).

In terms of domain architecture, RNase H type-2 spans 78-290 (LPLIGTDEVG…FKNTEKAKNA (213 aa)). A divalent metal cation is bound by residues Asp-84, Glu-85, and Asp-187.

It belongs to the RNase HII family. RnhC subfamily. The cofactor is Mn(2+). Requires Mg(2+) as cofactor.

It localises to the cytoplasm. The enzyme catalyses Endonucleolytic cleavage to 5'-phosphomonoester.. Functionally, endonuclease that specifically degrades the RNA of RNA-DNA hybrids. The polypeptide is Ribonuclease HIII (Streptococcus pneumoniae (strain P1031)).